A 294-amino-acid chain; its full sequence is 4-hydroxy-tetrahydrodipicolinate synthase (294 aa).

Position 45 (Thr45) interacts with pyruvate. Tyr133 functions as the Proton donor/acceptor in the catalytic mechanism. The active-site Schiff-base intermediate with substrate is the Lys162. Position 204 (Ile204) interacts with pyruvate.

It belongs to the DapA family. In terms of assembly, homotetramer; dimer of dimers.

It localises to the cytoplasm. The enzyme catalyses L-aspartate 4-semialdehyde + pyruvate = (2S,4S)-4-hydroxy-2,3,4,5-tetrahydrodipicolinate + H2O + H(+). The protein operates within amino-acid biosynthesis; L-lysine biosynthesis via DAP pathway; (S)-tetrahydrodipicolinate from L-aspartate: step 3/4. Functionally, catalyzes the condensation of (S)-aspartate-beta-semialdehyde [(S)-ASA] and pyruvate to 4-hydroxy-tetrahydrodipicolinate (HTPA). This Bartonella tribocorum (strain CIP 105476 / IBS 506) protein is 4-hydroxy-tetrahydrodipicolinate synthase.